An 85-amino-acid chain; its full sequence is RNA-binding protein Hfq (85 aa).

Residues 9 to 68 (DPFLNALRRERIPVSIYLVNGIKLQGQIESFDQFVVLLKNTVSQMVYKHAISTVVPARIP) enclose the Sm domain.

This sequence belongs to the Hfq family. Homohexamer.

RNA chaperone that binds small regulatory RNA (sRNAs) and mRNAs to facilitate mRNA translational regulation in response to envelope stress, environmental stress and changes in metabolite concentrations. Also binds with high specificity to tRNAs. This is RNA-binding protein Hfq from Idiomarina loihiensis (strain ATCC BAA-735 / DSM 15497 / L2-TR).